The chain runs to 509 residues: Maturase K (509 aa).

Belongs to the intron maturase 2 family. MatK subfamily.

The protein resides in the plastid. It is found in the chloroplast. Functionally, usually encoded in the trnK tRNA gene intron. Probably assists in splicing its own and other chloroplast group II introns. The sequence is that of Maturase K from Opuntia quimilo (Cactus).